Consider the following 402-residue polypeptide: Odorant receptor 22c (402 aa).

The Cytoplasmic segment spans residues 1 to 42 (MTDSGQPAIADHFYRIPRISGLIVGLWPQRIRGGGGRPWHAH). A helical membrane pass occupies residues 43 to 63 (LLFVFAFAMVVVGAVGEVSYG). The Extracellular portion of the chain corresponds to 64 to 73 (CVHLDNLVVA). Residues 74–94 (LEAFCPGTTKAVCVLKLWVFF) traverse the membrane as a helical segment. At 95–134 (RSNRRWAELVQRLRAILWESRRQEAQRMLVGLATTANRLS) the chain is on the cytoplasmic side. Residues 135–155 (LLLLSSGTATNAAFTLQPLIM) traverse the membrane as a helical segment. At 156 to 173 (GLYRWIVQLPGQTELPFN) the chain is on the extracellular side. The chain crosses the membrane as a helical span at residues 174–194 (IILPSFAVQPGVFPLTYVLLT). Topologically, residues 195-201 (ASGACTV) are cytoplasmic. A helical membrane pass occupies residues 202–222 (FAFSFVDGFFICSCLYICGAF). The Extracellular segment spans residues 223 to 276 (RLVQQDIRRIFADLHGDSVDVFTEEMNAEVRHRLAQVVERHNAIIDFCTDLTRQ). Residues 277–297 (FTVIVLMHFLSAAFVLCSTIL) form a helical membrane-spanning segment. At 298–307 (DIMLNTSSLS) the chain is on the cytoplasmic side. Residues 308–328 (GLTYICYIIAALTQLFLYCFG) traverse the membrane as a helical segment. The Extracellular portion of the chain corresponds to 329 to 402 (GNHVSESSAA…SYITLLKTFL (74 aa)).

It belongs to the insect chemoreceptor superfamily. Heteromeric odorant receptor channel (TC 1.A.69) family. Or1a subfamily. In terms of assembly, interacts with Orco. Complexes exist early in the endomembrane system in olfactory sensory neurons (OSNs), coupling these complexes to the conserved ciliary trafficking pathway. Not expressed in either the antenna or maxillary palp.

The protein resides in the cell membrane. Its function is as follows. Odorant receptor which mediates acceptance or avoidance behavior, depending on its substrates. The odorant receptor repertoire encodes a large collection of odor stimuli that vary widely in identity, intensity, and duration. May form a complex with Orco to form odorant-sensing units, providing sensitive and prolonged odorant signaling and calcium permeability. In Drosophila melanogaster (Fruit fly), this protein is Odorant receptor 22c (Or22c).